The primary structure comprises 86 residues: High affinity immunoglobulin epsilon receptor subunit gamma (86 aa).

The first 18 residues, M1–A18, serve as a signal peptide directing secretion. At L19–Q23 the chain is on the extracellular side. The helical transmembrane segment at L24–C44 threads the bilayer. Residues R45–Q86 lie on the Cytoplasmic side of the membrane. The region spanning A54–E82 is the ITAM domain. 2 positions are modified to phosphotyrosine: Y65 and Y76. A Phosphothreonine modification is found at T78.

It belongs to the CD3Z/FCER1G family. IgE Fc receptor is a tetramer of an alpha chain, a beta chain, and two disulfide linked gamma chains. Associates with FCGR1A; forms a functional signaling complex. The signaling subunit of immunoglobulin gamma (IgG) Fc receptor complex. As a homodimer or a heterodimer of CD247 and FCER1G, associates with the ligand binding subunit FCGR3A to form a functional receptor complex. Associates with CLEC6A. Interacts with CLEC4E. Interacts (via ITAM domain) with SYK (via SH2 domains); activates SYK, enabling integrin-mediated activation of neutrophils and macrophages. Interacts with CSF2RB and recruits SYK in response to IL3 stimulation; this interaction is direct. Interacts with CD300LH; the interaction may be indirect. Interacts with CD300LD. Interacts with TARM1. As to expression, expressed in mast cells (at protein level). Expressed in basophils (at protein level).

It is found in the cell membrane. In terms of biological role, adapter protein containing an immunoreceptor tyrosine-based activation motif (ITAM) that transduces activation signals from various immunoreceptors. As a component of the high-affinity immunoglobulin E (IgE) receptor, mediates allergic inflammatory signaling in mast cells. As a constitutive component of interleukin-3 receptor complex, selectively mediates interleukin 4/IL4 production by basophils, priming T-cells toward effector T-helper 2 subset. Associates with pattern recognition receptors CLEC4D and CLEC4E to form a functional signaling complex in myeloid cells. Binding of mycobacterial trehalose 6,6'-dimycolate (TDM) to this receptor complex leads to phosphorylation of ITAM, triggering activation of SYK, CARD9 and NF-kappa-B, consequently driving maturation of antigen-presenting cells and shaping antigen-specific priming of T-cells toward effector T-helper 1 and T-helper 17 cell subtypes. May function cooperatively with other activating receptors. Functionally linked to integrin beta-2/ITGB2-mediated neutrophil activation. Also involved in integrin alpha-2/ITGA2-mediated platelet activation. The sequence is that of High affinity immunoglobulin epsilon receptor subunit gamma from Mus musculus (Mouse).